Here is a 429-residue protein sequence, read N- to C-terminus: Phosphoribosylamine--glycine ligase (429 aa).

Positions 109–316 (KDFLARHNIP…LVELCLAACE (208 aa)) constitute an ATP-grasp domain. 135–196 (LREKGAPIVI…EEFLDGEEAS (62 aa)) is a binding site for ATP. The interval 212 to 236 (SQDHKRVGDKDTGPNTGGMGAYSPA) is disordered. A compositionally biased stretch (basic and acidic residues) spans 213-223 (QDHKRVGDKDT). Mg(2+)-binding residues include glutamate 286 and asparagine 288.

It belongs to the GARS family. In terms of assembly, monomer. The cofactor is Mg(2+). It depends on Mn(2+) as a cofactor.

It catalyses the reaction 5-phospho-beta-D-ribosylamine + glycine + ATP = N(1)-(5-phospho-beta-D-ribosyl)glycinamide + ADP + phosphate + H(+). Its pathway is purine metabolism; IMP biosynthesis via de novo pathway; N(1)-(5-phospho-D-ribosyl)glycinamide from 5-phospho-alpha-D-ribose 1-diphosphate: step 2/2. The sequence is that of Phosphoribosylamine--glycine ligase from Escherichia coli O6:H1 (strain CFT073 / ATCC 700928 / UPEC).